Here is a 401-residue protein sequence, read N- to C-terminus: Enoyl-[acyl-carrier-protein] reductase [NADH] (401 aa).

Residues 48–53, 74–75, 111–112, and 140–141 contribute to the NAD(+) site; these read GASSGY, FE, DA, and LA. A substrate-binding site is contributed by Tyr226. Tyr236 acts as the Proton donor in catalysis. NAD(+) is bound by residues Lys245 and 274-276; that span reads VVT.

It belongs to the TER reductase family. In terms of assembly, monomer.

It catalyses the reaction a 2,3-saturated acyl-[ACP] + NAD(+) = a (2E)-enoyl-[ACP] + NADH + H(+). The protein operates within lipid metabolism; fatty acid biosynthesis. In terms of biological role, involved in the final reduction of the elongation cycle of fatty acid synthesis (FAS II). Catalyzes the reduction of a carbon-carbon double bond in an enoyl moiety that is covalently linked to an acyl carrier protein (ACP). In Xylella fastidiosa (strain Temecula1 / ATCC 700964), this protein is Enoyl-[acyl-carrier-protein] reductase [NADH].